Here is a 53-residue protein sequence, read N- to C-terminus: Conotoxin Bu27 (53 aa).

A propeptide spanning residues 1–12 is cleaved from the precursor; sequence ASDGRNAVVHER. Proline 14 is subject to 4-hydroxyproline. Glutamate 15 bears the 4-carboxyglutamate mark. O-linked (HexNAc...) threonine glycosylation is found at threonine 19 and threonine 21. 4-hydroxyproline is present on residues proline 29, proline 34, proline 35, proline 43, proline 44, and proline 48. Proline 48 bears the Proline amide mark. Residues 49–53 constitute a propeptide that is removed on maturation; sequence GRRND.

Belongs to the conotoxin A superfamily. Post-translationally, contains 3 disulfide bonds. As to expression, expressed by the venom duct.

The protein localises to the secreted. Probable neurotoxin with ion channel inhibitor activity. This Conus bullatus (Bubble cone) protein is Conotoxin Bu27.